Reading from the N-terminus, the 168-residue chain is Venom nerve growth factor (168 aa).

The first 18 residues, 1 to 18, serve as a signal peptide directing secretion; the sequence is MSMLCYTLIIAFLIGIWA. The propeptide occupies 19-123; the sequence is APKSEDNVSL…ADSLNRNIRA (105 aa). Residue asparagine 25 is glycosylated (N-linked (GlcNAc...) asparagine). The tract at residues 48 to 70 is disordered; sequence LKTSQNTDQHSPAPKKAEDQEFG. N-linked (GlcNAc...) asparagine glycosylation occurs at asparagine 148.

It belongs to the NGF-beta family. As to quaternary structure, homodimer; non-covalently linked. In terms of tissue distribution, expressed by the venom gland.

The protein resides in the secreted. In terms of biological role, nerve growth factor is important for the development and maintenance of the sympathetic and sensory nervous systems. It stimulates division and differentiation of sympathetic and embryonic sensory neurons as well as basal forebrain cholinergic neurons in the brain. Its relevance in the snake venom is not clear. However, it has been shown to inhibit metalloproteinase-dependent proteolysis of platelet glycoprotein Ib alpha, suggesting a metalloproteinase inhibition to prevent metalloprotease autodigestion and/or protection against prey proteases. This Echis ocellatus (Ocellated saw-scaled viper) protein is Venom nerve growth factor.